A 272-amino-acid chain; its full sequence is Glutamate racemase (272 aa).

Substrate contacts are provided by residues 13 to 14 (DS) and 45 to 46 (YG). The active-site Proton donor/acceptor is the cysteine 76. A substrate-binding site is contributed by 77–78 (NT). The active-site Proton donor/acceptor is the cysteine 187. Position 188–189 (188–189 (TH)) interacts with substrate.

It belongs to the aspartate/glutamate racemases family.

The enzyme catalyses L-glutamate = D-glutamate. The protein operates within cell wall biogenesis; peptidoglycan biosynthesis. In terms of biological role, provides the (R)-glutamate required for cell wall biosynthesis. The sequence is that of Glutamate racemase from Roseiflexus sp. (strain RS-1).